The following is a 591-amino-acid chain: Frizzled and smoothened-like protein F (591 aa).

Residues 1–17 (MKILIIFIIFIISYISG) form the signal peptide. The Extracellular segment spans residues 18–244 (FEIPKGFGIG…KWDQLLTMSK (227 aa)). Positions 30–177 (IPDAECLNYI…GTFAVPCSDP (148 aa)) constitute an FZ domain. Intrachain disulfides connect cysteine 35–cysteine 105, cysteine 48–cysteine 98, and cysteine 123–cysteine 174. Residues asparagine 167, asparagine 187, asparagine 202, and asparagine 230 are each glycosylated (N-linked (GlcNAc...) asparagine). A helical transmembrane segment spans residues 245 to 265 (ILSTISFILSLYNVLTFGIIN). Residues 266-275 (KKVSDPHKCT) lie on the Cytoplasmic side of the membrane. The helical transmembrane segment at 276 to 296 (CFFSGSIALVNLCDIITYGIG) threads the bilayer. At 297–321 (YEELLCPEPGRSAKQQLDPVCGLTG) the chain is on the extracellular side. The chain crosses the membrane as a helical span at residues 322-342 (AFFHLGITYCVLWSMTMGLVL). The Cytoplasmic portion of the chain corresponds to 343-353 (YCSVKRQKWFK). A helical transmembrane segment spans residues 354 to 374 (FNYFLIGNTTFTITTVVIAAA). Over 375–397 (TSKFEAGLGSIECWIRDRWYAIS) the chain is Extracellular. The helical transmembrane segment at 398 to 418 (LFWIPCGIALLIGSFCIIAVI) threads the bilayer. Over 419-442 (HEVYKTSKKSISNRNDLLQRELKP) the chain is Cytoplasmic. Residues 443–463 (LLIVIFISGSFLYLFIFFFDI) traverse the membrane as a helical segment. Residues 464 to 495 (ERKFGGYRSAVEDYVLCLLNGSQEECFTTGPS) are Extracellular-facing. Asparagine 483 is a glycosylation site (N-linked (GlcNAc...) asparagine). The helical transmembrane segment at 496-516 (YVPYFLFYLVIRWFGIIFFLF) threads the bilayer. Topologically, residues 517 to 591 (YGTSNIARKI…AVELESIKIN (75 aa)) are cytoplasmic. The span at 538-571 (SSISPKSTPKSSPKNSDSKINSNSTNNNNMILND) shows a compositional bias: low complexity. Residues 538–573 (SSISPKSTPKSSPKNSDSKINSNSTNNNNMILNDNN) form a disordered region.

This sequence belongs to the G-protein coupled receptor Fz/Smo family.

It is found in the membrane. This Dictyostelium discoideum (Social amoeba) protein is Frizzled and smoothened-like protein F (fslF).